Consider the following 125-residue polypeptide: UPF0225 protein Cgl1438/cg1626 (125 aa).

This sequence belongs to the UPF0225 family.

The chain is UPF0225 protein Cgl1438/cg1626 from Corynebacterium glutamicum (strain ATCC 13032 / DSM 20300 / JCM 1318 / BCRC 11384 / CCUG 27702 / LMG 3730 / NBRC 12168 / NCIMB 10025 / NRRL B-2784 / 534).